A 174-amino-acid polypeptide reads, in one-letter code: Shikimate kinase 2 (174 aa).

12–17 (GCGKTT) lines the ATP pocket. T16 and D32 together coordinate Mg(2+). Residues D34, R58, and G79 each coordinate substrate. The segment at 112–126 (QAAPEEDLRPTLTGK) is LID domain. Residue R120 participates in ATP binding. R139 is a substrate binding site.

This sequence belongs to the shikimate kinase family. AroL subfamily. Monomer. The cofactor is Mg(2+).

The protein resides in the cytoplasm. It catalyses the reaction shikimate + ATP = 3-phosphoshikimate + ADP + H(+). The protein operates within metabolic intermediate biosynthesis; chorismate biosynthesis; chorismate from D-erythrose 4-phosphate and phosphoenolpyruvate: step 5/7. In terms of biological role, catalyzes the specific phosphorylation of the 3-hydroxyl group of shikimic acid using ATP as a cosubstrate. The sequence is that of Shikimate kinase 2 from Escherichia coli O81 (strain ED1a).